The primary structure comprises 158 residues: NAD(P)H-quinone oxidoreductase subunit J, chloroplastic (158 aa).

This sequence belongs to the complex I 30 kDa subunit family. NDH is composed of at least 16 different subunits, 5 of which are encoded in the nucleus.

It localises to the plastid. Its subcellular location is the chloroplast thylakoid membrane. It carries out the reaction a plastoquinone + NADH + (n+1) H(+)(in) = a plastoquinol + NAD(+) + n H(+)(out). It catalyses the reaction a plastoquinone + NADPH + (n+1) H(+)(in) = a plastoquinol + NADP(+) + n H(+)(out). Its function is as follows. NDH shuttles electrons from NAD(P)H:plastoquinone, via FMN and iron-sulfur (Fe-S) centers, to quinones in the photosynthetic chain and possibly in a chloroplast respiratory chain. The immediate electron acceptor for the enzyme in this species is believed to be plastoquinone. Couples the redox reaction to proton translocation, and thus conserves the redox energy in a proton gradient. The sequence is that of NAD(P)H-quinone oxidoreductase subunit J, chloroplastic from Cucumis sativus (Cucumber).